Consider the following 449-residue polypeptide: Na(+)-translocating NADH-quinone reductase subunit A (449 aa).

This sequence belongs to the NqrA family. Composed of six subunits; NqrA, NqrB, NqrC, NqrD, NqrE and NqrF.

It carries out the reaction a ubiquinone + n Na(+)(in) + NADH + H(+) = a ubiquinol + n Na(+)(out) + NAD(+). In terms of biological role, NQR complex catalyzes the reduction of ubiquinone-1 to ubiquinol by two successive reactions, coupled with the transport of Na(+) ions from the cytoplasm to the periplasm. NqrA to NqrE are probably involved in the second step, the conversion of ubisemiquinone to ubiquinol. This is Na(+)-translocating NADH-quinone reductase subunit A from Actinobacillus pleuropneumoniae serotype 5b (strain L20).